Reading from the N-terminus, the 309-residue chain is Glutaminase (309 aa).

7 residues coordinate substrate: Ser65, Asn117, Glu162, Asn169, Tyr193, Tyr245, and Val263.

It belongs to the glutaminase family. As to quaternary structure, homotetramer.

The catalysed reaction is L-glutamine + H2O = L-glutamate + NH4(+). The protein is Glutaminase of Bacillus cereus (strain ATCC 10987 / NRS 248).